Here is a 401-residue protein sequence, read N- to C-terminus: Riboflavin biosynthesis protein RibBA (401 aa).

The interval 1-203 (MTDFQFSKVE…IQQLQEYRRK (203 aa)) is DHBP synthase. D-ribulose 5-phosphate is bound by residues 30-31 (RE), aspartate 35, 142-146 (RNGHT), and glutamate 166. Glutamate 31 is a Mg(2+) binding site. Histidine 145 contacts Mg(2+). The GTP cyclohydrolase II stretch occupies residues 204-401 (HDSLVKQISV…QIKMGHMFNF (198 aa)). 254 to 258 (RIHSE) is a GTP binding site. Residues cysteine 259, cysteine 270, and cysteine 272 each contribute to the Zn(2+) site. Residues glutamine 275, 297-299 (EGR), and threonine 319 contribute to the GTP site. Aspartate 331 acts as the Proton acceptor; for GTP cyclohydrolase activity in catalysis. Arginine 333 serves as the catalytic Nucleophile; for GTP cyclohydrolase activity. GTP-binding residues include threonine 354 and lysine 359.

The protein in the N-terminal section; belongs to the DHBP synthase family. It in the C-terminal section; belongs to the GTP cyclohydrolase II family. Mg(2+) is required as a cofactor. Requires Mn(2+) as cofactor. It depends on Zn(2+) as a cofactor.

It carries out the reaction D-ribulose 5-phosphate = (2S)-2-hydroxy-3-oxobutyl phosphate + formate + H(+). The enzyme catalyses GTP + 4 H2O = 2,5-diamino-6-hydroxy-4-(5-phosphoribosylamino)-pyrimidine + formate + 2 phosphate + 3 H(+). It functions in the pathway cofactor biosynthesis; riboflavin biosynthesis; 2-hydroxy-3-oxobutyl phosphate from D-ribulose 5-phosphate: step 1/1. It participates in cofactor biosynthesis; riboflavin biosynthesis; 5-amino-6-(D-ribitylamino)uracil from GTP: step 1/4. In terms of biological role, catalyzes the conversion of D-ribulose 5-phosphate to formate and 3,4-dihydroxy-2-butanone 4-phosphate. Catalyzes the conversion of GTP to 2,5-diamino-6-ribosylamino-4(3H)-pyrimidinone 5'-phosphate (DARP), formate and pyrophosphate. This chain is Riboflavin biosynthesis protein RibBA, found in Actinobacillus pleuropneumoniae serotype 3 (strain JL03).